A 901-amino-acid chain; its full sequence is Modifier of cell death (901 aa).

2 disordered regions span residues 147–169 and 218–245; these read AQKR…PRAA and PRKS…SPSP. A C2H2-type zinc finger spans residues 259 to 282; sequence FKCAECGDGFPVMDRLCDHMIKQH. 3 disordered regions span residues 494–528, 682–717, and 779–901; these read KKEH…DDVP, QERV…SHEE, and HKAI…WDDN. Over residues 817–828 the composition is skewed to low complexity; that stretch reads EAAAKLIQAENE. A compositionally biased stretch (acidic residues) spans 829 to 840; that stretch reads MVVEEEEVEEPP. Residues 846 to 866 are compositionally biased toward basic and acidic residues; the sequence is QVPKEKEVEVAEAEKLPEQVK.

Its function is as follows. Promotes programmed cell death. Its role in programmed cell death may be in conjunction with cell cycle regulatory factor efl-1 and the synthetic multivulva class B proteins dpl-1 and lin-35, and is independent of the ced-1, ced-8 and ced-9 pathways. This Caenorhabditis elegans protein is Modifier of cell death.